A 355-amino-acid polypeptide reads, in one-letter code: uncharacterized protein (355 aa).

A disordered region spans residues 1-61 (MNKKIEKNNN…PKRRGRRPKK (61 aa)). Residues 18-37 (YESNTTDNQLIMKKNANSGS) show a composition bias toward polar residues.

This is an uncharacterized protein from Acanthamoeba polyphaga mimivirus (APMV).